The primary structure comprises 962 residues: Voltage-gated delayed rectifier potassium channel KCNH1 (962 aa).

Residues Met1–Trp220 lie on the Cytoplasmic side of the membrane. The PAS domain occupies Gln14–Ser94. Positions Asn93 to Cys145 constitute a PAC domain. Positions Phe151–Arg162 are required for phosphatidylinositol bisphosphate binding. Residues Asp221 to Phe241 form a helical membrane-spanning segment. The Extracellular segment spans residues Lys242–Val248. The chain crosses the membrane as a helical span at residues Ala249–Phe269. The Cytoplasmic portion of the chain corresponds to His270–Asn290. The chain crosses the membrane as a helical span at residues Tyr291–Ile309. The Extracellular segment spans residues Asn310–Gly318. The chain crosses the membrane as a helical; Voltage-sensor span at residues Ile319–Leu341. Residues Asp342–Ala350 lie on the Cytoplasmic side of the membrane. The chain crosses the membrane as a helical span at residues Val351–Ser372. Residues Ile373–Ser421 are Extracellular-facing. Residues Asn388 and Asn406 are each glycosylated (N-linked (GlcNAc...) asparagine). Residues Val422 to Ala443 constitute an intramembrane region (pore-forming). A Selectivity filter motif is present at residues Ser436–Asn441. Topologically, residues Pro444–Lys450 are extracellular. A helical membrane pass occupies residues Ile451 to Val471. The Cytoplasmic segment spans residues Thr472–Ser962. The segment at Lys646–Asn743 is calmodulin-binding. Residues Tyr672–Leu674 are interaction with cyclic nucleotide-binding pocket. Residues Glu830 to Ser852 show a composition bias toward basic and acidic residues. Disordered stretches follow at residues Glu830–Lys859 and Ser933–Ser962. The segment at Ala897–Ser937 is CAD (involved in subunit assembly). Residues Arg934–Pro952 are compositionally biased toward polar residues. A phosphoserine mark is found at Ser947, Ser951, and Ser954. The segment covering Glu953–Ser962 has biased composition (basic and acidic residues).

The protein belongs to the potassium channel family. H (Eag) (TC 1.A.1.20) subfamily. Kv10.1/KCNH1 sub-subfamily. In terms of assembly, homomultimer. The potassium channel is composed of a homo- or heterotetrameric complex of pore-forming alpha subunits that can associate with modulating beta subunits. Heteromultimer with KCNH5/EAG2. Interacts with ALG10B. Interacts with RABEP1. Interacts (via C-terminus) with CTTN. Interacts (via cytoplasmic region) with Ca(2+)-bound calmodulin. Post-translationally, channel activity is regulated via tyrosine phosphorylation/dephosphorylation by SRC and PTPN6. In terms of tissue distribution, detected in cerebellum, at parallel fiber synapses on Purkinje cell spines. Detected in hippocampus neurons (at protein level). Detected in brain, but not in the other tissues tested; expression is highest in granular cells of the dentate gyrus, in hippocampus CA3 pyramidal cells, and in cerebellar granule cells. Detected in pituitary.

The protein resides in the cell membrane. Its subcellular location is the nucleus inner membrane. The protein localises to the cell projection. It is found in the dendrite. It localises to the axon. The protein resides in the presynaptic cell membrane. Its subcellular location is the perikaryon. The protein localises to the postsynaptic density membrane. It is found in the early endosome membrane. It carries out the reaction K(+)(in) = K(+)(out). With respect to regulation, channel activity is inhibited by interaction with Ca(2+)-bound calmodulin. Interaction of a single pore-forming alpha subunit with a calmodulin chain is sufficient to promote channel closure. Channel activity is not regulated by cyclic nucleotides. Channel activity is inhibited by binding intracellular phosphatidylinositol-3,5-bisphosphate and phosphatidylinositol-4,5-bisphosphate (PIP2), but is not inhibited by phosphatidylinositol 4-phosphate. Its function is as follows. Pore-forming (alpha) subunit of a voltage-gated delayed rectifier potassium channel that mediates outward-rectifying potassium currents which, on depolarization, reaches a steady-state level and do not inactivate. The activation kinetics depend on the prepulse potential and external divalent cation concentration. With negative prepulses, the current activation is delayed and slowed down several fold, whereas more positive prepulses speed up activation. The time course of activation is biphasic with a fast and a slowly activating current component. Activates at more positive membrane potentials and exhibit a steeper activation curve. Channel properties are modulated by subunit assembly. Mediates IK(NI) current in myoblasts. Involved in the regulation of cell proliferation and differentiation, in particular adipogenic and osteogenic differentiation in bone marrow-derived mesenchymal stem cells (MSCs). This is Voltage-gated delayed rectifier potassium channel KCNH1 from Rattus norvegicus (Rat).